A 79-amino-acid polypeptide reads, in one-letter code: Small ribosomal subunit protein bS18 (79 aa).

It belongs to the bacterial ribosomal protein bS18 family. In terms of assembly, part of the 30S ribosomal subunit. Forms a tight heterodimer with protein bS6.

Functionally, binds as a heterodimer with protein bS6 to the central domain of the 16S rRNA, where it helps stabilize the platform of the 30S subunit. In Afipia carboxidovorans (strain ATCC 49405 / DSM 1227 / KCTC 32145 / OM5) (Oligotropha carboxidovorans), this protein is Small ribosomal subunit protein bS18.